Here is a 794-residue protein sequence, read N- to C-terminus: Phenylalanine--tRNA ligase beta subunit (794 aa).

The 119-residue stretch at 40-158 (NSLNSELILG…LKKYIGSDVK (119 aa)) folds into the tRNA-binding domain. A B5 domain is found at 402 to 477 (KNKQSLEIKL…RLYSYDKIDE (76 aa)). The Mg(2+) site is built by D455, D461, E464, and E465. An FDX-ACB domain is found at 702–794 (SKFQSSSRDL…NIKQMKVVIR (93 aa)).

The protein belongs to the phenylalanyl-tRNA synthetase beta subunit family. Type 1 subfamily. As to quaternary structure, tetramer of two alpha and two beta subunits. Mg(2+) is required as a cofactor.

The protein resides in the cytoplasm. It carries out the reaction tRNA(Phe) + L-phenylalanine + ATP = L-phenylalanyl-tRNA(Phe) + AMP + diphosphate + H(+). This chain is Phenylalanine--tRNA ligase beta subunit, found in Mycoplasma mycoides subsp. mycoides SC (strain CCUG 32753 / NCTC 10114 / PG1).